The chain runs to 247 residues: Pulmonary surfactant-associated protein A (247 aa).

The signal sequence occupies residues 1–15 (MLLLSLALTLISAPA). One can recognise a Collagen-like domain in the interval 27-99 (GSPGIPGTPG…PGERGPPGLP (73 aa)). 4-hydroxyproline is present on residues proline 29, proline 32, proline 35, proline 41, proline 53, proline 56, proline 62, proline 66, and proline 69. Positions 30 to 100 (GIPGTPGSHG…GERGPPGLPA (71 aa)) are disordered. Positions 41–50 (PGRDGRDGVK) are enriched in basic and acidic residues. A compositionally biased stretch (pro residues) spans 53 to 64 (PGPPGPMGPPGG). The span at 83–92 (ERGDKGEPGE) shows a compositional bias: basic and acidic residues. One can recognise a C-type lectin domain in the interval 132–247 (AVGEKIFSTN…LQYRLVICEF (116 aa)). 2 cysteine pairs are disulfide-bonded: cysteine 154-cysteine 245 and cysteine 223-cysteine 237. Residue asparagine 206 is glycosylated (N-linked (GlcNAc...) asparagine). Ca(2+)-binding residues include glutamate 214, arginine 216, asparagine 233, and aspartate 234.

The protein belongs to the SFTPA family. In terms of assembly, oligomeric complex of 6 set of homotrimers.

It is found in the secreted. Its subcellular location is the extracellular space. The protein resides in the extracellular matrix. The protein localises to the surface film. In presence of calcium ions, it binds to surfactant phospholipids and contributes to lower the surface tension at the air-liquid interface in the alveoli of the mammalian lung and is essential for normal respiration. Enhances the expression of MYO18A/SP-R210 on alveolar macrophages. In Oryctolagus cuniculus (Rabbit), this protein is Pulmonary surfactant-associated protein A (SFTPA1).